A 414-amino-acid chain; its full sequence is Tyrosine--tRNA ligase (414 aa).

An L-tyrosine-binding site is contributed by Tyr35. The short motif at 40-49 (PTADSLHVGH) is the 'HIGH' region element. Residues Tyr164 and Gln168 each coordinate L-tyrosine. The 'KMSKS' region signature appears at 226–230 (KFGKT). Residue Lys229 coordinates ATP. The 68-residue stretch at 347–414 (TKVIDALVEL…KKKYFVILVK (68 aa)) folds into the S4 RNA-binding domain.

The protein belongs to the class-I aminoacyl-tRNA synthetase family. TyrS type 1 subfamily. Homodimer.

The protein resides in the cytoplasm. It carries out the reaction tRNA(Tyr) + L-tyrosine + ATP = L-tyrosyl-tRNA(Tyr) + AMP + diphosphate + H(+). Catalyzes the attachment of tyrosine to tRNA(Tyr) in a two-step reaction: tyrosine is first activated by ATP to form Tyr-AMP and then transferred to the acceptor end of tRNA(Tyr). The sequence is that of Tyrosine--tRNA ligase from Mycoplasma capricolum subsp. capricolum (strain California kid / ATCC 27343 / NCTC 10154).